The sequence spans 487 residues: Homoserine O-acetyltransferase (487 aa).

In terms of domain architecture, AB hydrolase-1 spans 45–352; it reads NVILVCHPLT…PHGHDGFLLE (308 aa). The active-site Nucleophile is the S150. A substrate-binding site is contributed by R219. Active-site residues include D313 and H346. D347 is a binding site for substrate. CBS domains lie at 373–430 and 434–487; these read MTNN…FQDL and MTKD…EVLQ.

This sequence belongs to the AB hydrolase superfamily. MetX family. In terms of assembly, homodimer.

The protein localises to the cytoplasm. It catalyses the reaction L-homoserine + acetyl-CoA = O-acetyl-L-homoserine + CoA. It functions in the pathway amino-acid biosynthesis; L-methionine biosynthesis via de novo pathway; O-acetyl-L-homoserine from L-homoserine: step 1/1. In terms of biological role, transfers an acetyl group from acetyl-CoA to L-homoserine, forming acetyl-L-homoserine. This is Homoserine O-acetyltransferase from Methanocorpusculum labreanum (strain ATCC 43576 / DSM 4855 / Z).